The sequence spans 74 residues: Mucroporin (74 aa).

The N-terminal stretch at M1–A22 is a signal peptide. K39 carries the lysine amide modification. Positions Q45 to Y74 are excised as a propeptide.

The protein belongs to the non-disulfide-bridged peptide (NDBP) superfamily. Short antimicrobial peptide (group 4) family. As to expression, expressed by the venom gland.

The protein resides in the secreted. It is found in the target cell membrane. In terms of biological role, mucroporin: cationic host defense peptide that have antibacterial activity by breaking membranes. Is more effective on Gram-positive than on Gram-negative bacteria. Minimum inhibitory concentrations (MIC) are the following: MIC=&gt;100 ug/ml against E.coli AB94012, MIC=&gt;100 ug/ml against P.aeruginosa AB93066, MIC=25 ug/ml against B.thuringiensis AB92037, MIC=50 ug/ml against B.subtilis AB91021, MIC=25 ug/ml against S.aureus AB94004, and MIC=25 ug/ml against the methicillin-resistant coagulase-negative Staphylococcus. Its synthetic analog mucroporin-M1 is more effective. Does not show antiviral activity against any of measles, SARS-CoV, influenza H5N1, hepatitis B and HIV-1 viruses. Functionally, mutant mucroporin-M1: can inhibit Gram-positive bacteria at low concentrations and antibiotic-resistant pathogens. Minimum inhibitory concentrations (MIC) are the following: MIC=12.5 ug/ml against E.coli AB94012, MIC=100 ug/ml against P.aeruginosa AB93066, MIC=25 ug/ml against B.thuringiensis AB92037, MIC=25 ug/ml against B.subtilis AB91021, MIC=5 ug/ml against S.aureus AB94004, and MIC=5 ug/ml against the methicillin-resistant coagulase-negative Staphylococcus. Also shows antiviral activities against measles (EC(50) of 7.15 ug/ml), SARS-CoV (EC(50) of 14.46 ug/ml), influenza H5N1 viruses (EC(50) of 2.10 mug/ml), HIV-1, and hepatitis B virus. This is Mucroporin from Lychas mucronatus (Chinese swimming scorpion).